Reading from the N-terminus, the 829-residue chain is Sodium/hydrogen exchanger 3 (829 aa).

The first 26 residues, 1–26 (MWHRALGPGWKLLLALALTSLQGARG), serve as a signal peptide directing secretion. The Extracellular segment spans residues 27–46 (AEEEPSSDGSFQVVTFKWHH). Residues 47–69 (VQDPYIIALWILVASLAKIVFHL) traverse the membrane as a helical segment. Topologically, residues 70 to 77 (SHKVTSIV) are cytoplasmic. A helical membrane pass occupies residues 78–97 (PESALLIVLGLVLGGIVWAA). The Extracellular segment spans residues 98 to 106 (DHIASFTLT). The helical transmembrane segment at 107-124 (PTLFFFYLLPPIVLDAGY) threads the bilayer. The Cytoplasmic segment spans residues 125–127 (FMP). A helical membrane pass occupies residues 128–163 (NRLFFGNLGTILLYAVIGTIWNAATTGLSLYGVFLS). The a 1,2-diacyl-sn-glycero-3-phospho-(1D-myo-inositol) site is built by Gly-133, Gly-136, and Thr-137. At 164-176 (GLMGELKIGLLDF) the chain is on the extracellular side. Residues 177–198 (LLFGSLIAAVDPVAVLAVFEEV) traverse the membrane as a helical segment. Topologically, residues 199–200 (HV) are cytoplasmic. The chain crosses the membrane as a helical span at residues 201 to 232 (NEVLFIIVFGESLLNDAVTVVLYNVFESFVTL). Over 233 to 239 (GGDAVTG) the chain is Extracellular. A helical transmembrane segment spans residues 240–274 (VDCVKGIVSFFVVSLGGTLVGVIFAFLLSLVTRFT). Residues 275–276 (KH) are Cytoplasmic-facing. Residues 277-299 (VRIIEPGFVFVISYLSYLTSEML) form a helical membrane-spanning segment. The Extracellular segment spans residues 300–301 (SL). The helical transmembrane segment at 302 to 318 (SSILAITFCGICCQKYV) threads the bilayer. Residues 319-325 (KANISEQ) lie on the Cytoplasmic side of the membrane. Residues 326–354 (SATTVRYTMKMLASGAETIIFMFLGISAV) form a helical membrane-spanning segment. Over 355–362 (NPDIWTWN) the chain is Extracellular. Residues 363–384 (TAFVLLTLVFISVYRAIGVVLQ) form a helical membrane-spanning segment. Topologically, residues 385–397 (TWILNRYRMVQLE) are cytoplasmic. A 1,2-diacyl-sn-glycero-3-phospho-(1D-myo-inositol) is bound at residue Met-393. The helical transmembrane segment at 398–421 (TIDQVVMSYGGLRGAVAYALVVLL) threads the bilayer. Residues 422 to 428 (DEKKVKE) are Extracellular-facing. Residues 429 to 462 (KNLFVSTTLIVVFFTVIFQGLTIKPLVQWLKVKR) form a helical membrane-spanning segment. The Cytoplasmic portion of the chain corresponds to 463-829 (SEHREPKLNE…QPAAPESTHM (367 aa)). A 1,2-diacyl-sn-glycero-3-phospho-(1D-myo-inositol) contacts are provided by Gln-492, Ile-493, and His-495. Phosphoserine is present on residues Ser-550 and Ser-558. Positions 571–585 (RPSTVEASVSYFLRE) are interaction with EZR. The interaction with NHERF4 stretch occupies residues 586–663 (NVSAVCLDMQ…RKRLESFKSA (78 aa)). The interaction with AHCYL1 stretch occupies residues 587–691 (VSAVCLDMQS…AQKRRNSSIP (105 aa)). 2 positions are modified to phosphoserine: Ser-588 and Ser-603. Ser-659 bears the Phosphoserine; by SGK1 mark. Residues 677 to 687 (YKRERAQKRRN) show a composition bias toward basic residues. Residues 677-696 (YKRERAQKRRNSSIPNGKLP) form a disordered region. 3 positions are modified to phosphoserine: Ser-714, Ser-805, and Ser-808.

This sequence belongs to the monovalent cation:proton antiporter 1 (CPA1) transporter (TC 2.A.36) family. In terms of assembly, homodimer. Found in the forms of complex and dynamic macromolecular complexes. Binds NHERF1 and NHERF2. Interacts with CHP1; this interaction increases trafficking and activity of SLC9A3 at the plasma membrane. Interacts with CHP2 and SHANK2. Interacts with PDZK1 (via C-terminal PDZ domain). Interacts with NHERF4 and interactions decrease in response to elevated calcium ion levels. Interacts with AHCYL1; the interaction is required for SLC9A3 activity. Interacts with EZR; interaction targets SLC9A3 to the apical membrane. Interacts with SNX27 (via PDZ domains); directs SLC9A3 membrane insertion from early endosomes to the plasma membrane. In terms of processing, phosphorylated by PKA, which inhibits activity. Phosphorylation at Ser-659 by SGK1 is associated with increased abundance at the cell membrane. Phosphorylation at Ser-714 by CSNK2A1 regulates SLC9A3 activity through the formation of multiple signaling complexes.

The protein resides in the apical cell membrane. The protein localises to the cell membrane. Its subcellular location is the recycling endosome membrane. It localises to the early endosome membrane. The enzyme catalyses Na(+)(in) + H(+)(out) = Na(+)(out) + H(+)(in). Seems to switch between active and inactive modes in response to various stimuli. Activated directly or indirectly by membrane phosphatidylinositol (PIs). Regulated by a variety of auxiliary proteins, which facilitate the maturation, cell surface expression and function of the transporter. Inhibited specifically by the drug tenapanor. Functionally, plasma membrane Na(+)/H(+) antiporter. Exchanges intracellular H(+) ions for extracellular Na(+) in 1:1 stoichiometry, playing a key role in salt and fluid absorption and pH homeostasis. Major apical Na(+)/H(+) exchanger in kidney and intestine playing an important role in renal and intestine Na(+) absorption and blood pressure regulation. The polypeptide is Sodium/hydrogen exchanger 3 (Mus musculus (Mouse)).